The primary structure comprises 83 residues: Bowman-Birk type proteinase inhibitor C-II (83 aa).

The propeptide occupies 1–7; it reads MELNLFK. Intrachain disulfides connect cysteine 21–cysteine 75, cysteine 22–cysteine 37, cysteine 25–cysteine 71, cysteine 27–cysteine 35, cysteine 45–cysteine 52, cysteine 49–cysteine 64, and cysteine 54–cysteine 62.

It belongs to the Bowman-Birk serine protease inhibitor family.

This Glycine max (Soybean) protein is Bowman-Birk type proteinase inhibitor C-II.